Reading from the N-terminus, the 205-residue chain is Snake venom metalloproteinase BmooMPalpha-I (205 aa).

Positions Arg-8 to Pro-204 constitute a Peptidase M12B domain. Residues Glu-11 and Asp-95 each coordinate Ca(2+). Disulfide bonds link Cys-119–Cys-199, Cys-159–Cys-183, and Cys-161–Cys-166. Residue His-144 coordinates Zn(2+). The active site involves Glu-145. Residues His-148 and His-154 each contribute to the Zn(2+) site. 2 residues coordinate Ca(2+): Cys-199 and Asn-202.

The protein belongs to the venom metalloproteinase (M12B) family. P-I subfamily. Monomer. It depends on Zn(2+) as a cofactor. As to expression, expressed by the venom gland.

The protein localises to the secreted. With respect to regulation, inhibited by EDTA. Not inhibited by the serine proteinase inhibitors aprotinin and benzamidine. Its function is as follows. Snake venom zinc metalloproteinase that cleaves the alpha chain of fibrinogen (FGA) first followed by the beta chain (FGB) and shows no effect on the gamma chain. Cleaves only the beta chain of fibrin, leaving the gamma-dimer untouched. Shows proteolytic activity towards azocasein. Causes defibrinogenation when intraperitoneally administered on mice. This is Snake venom metalloproteinase BmooMPalpha-I from Bothrops moojeni (Lance-headed viper).